Consider the following 502-residue polypeptide: Arginine-specific demethylase JMJ22 (502 aa).

Residues 15 to 45 form a disordered region; it reads KSKSKRLKLHQHEPESLFPEKEVEEEDEDEG. Positions 24 to 35 are enriched in basic and acidic residues; sequence HQHEPESLFPEK. The region spanning 80-126 is the F-box domain; that stretch reads LGNLQILSDELVLDILGLLGANHLGVLATVTKSFYIFANHEPLWRNL. The 161-residue stretch at 279-439 folds into the JmjC domain; it reads EKVPVLDSEY…NVLEFLKKPN (161 aa). Positions 324, 326, and 407 each coordinate Fe cation.

Belongs to the JARID1 histone demethylase family. Requires Fe(2+) as cofactor. In terms of tissue distribution, expressed in inflorescences, roots and siliques, and, at low levels, in leaves and stems.

The protein resides in the nucleus. The enzyme catalyses N(omega),N(omega)-dimethyl-L-arginyl-[protein] + 2-oxoglutarate + O2 = N(omega)-methyl-L-arginyl-[protein] + formaldehyde + succinate + CO2. Its function is as follows. Histone demethylase that demethylates 'Arg-3' (H4R3me) of histone H4 with a specific activity for H4R3me2. Involved in the positive regulation of gene expression. Together with JMJ20, positively regulates seed germination by promoting the removal of repressive histone arginine methylations (e.g. H4R3me2) at GA3ox1 and GA3ox2 to trigger gibberellic acid (GA) biosynthesis. In Arabidopsis thaliana (Mouse-ear cress), this protein is Arginine-specific demethylase JMJ22.